A 374-amino-acid chain; its full sequence is Chaperone protein DnaJ (374 aa).

Positions 5 to 70 constitute a J domain; it reads DYYKLLGVDR…EKRAGYDRYG (66 aa). The segment at 136–214 adopts a CR-type zinc-finger fold; that stretch reads GIQAPIHYVT…CNGSGRRRDE (79 aa). Residues C149, C152, C166, C169, C188, C191, C202, and C205 each contribute to the Zn(2+) site. CXXCXGXG motif repeat units follow at residues 149-156, 166-173, 188-195, and 202-209; these read CDMCQGRG, CHTCQGSG, CTTCYGEG, and CKKCNGSG.

This sequence belongs to the DnaJ family. As to quaternary structure, homodimer. The cofactor is Zn(2+).

It is found in the cytoplasm. Participates actively in the response to hyperosmotic and heat shock by preventing the aggregation of stress-denatured proteins and by disaggregating proteins, also in an autonomous, DnaK-independent fashion. Unfolded proteins bind initially to DnaJ; upon interaction with the DnaJ-bound protein, DnaK hydrolyzes its bound ATP, resulting in the formation of a stable complex. GrpE releases ADP from DnaK; ATP binding to DnaK triggers the release of the substrate protein, thus completing the reaction cycle. Several rounds of ATP-dependent interactions between DnaJ, DnaK and GrpE are required for fully efficient folding. Also involved, together with DnaK and GrpE, in the DNA replication of plasmids through activation of initiation proteins. In Wolbachia sp. subsp. Brugia malayi (strain TRS), this protein is Chaperone protein DnaJ.